The chain runs to 320 residues: Olfactory receptor 51E2 (320 aa).

At 1-24 the chain is on the extracellular side; sequence MSSCNFTHATFMLIGIPGLEEAHF. Asn5 carries N-linked (GlcNAc...) asparagine glycosylation. A helical membrane pass occupies residues 25–45; it reads WFGFPLLSMYAVALFGNCIVV. Topologically, residues 46 to 53 are cytoplasmic; sequence FIVRTERS. A helical transmembrane segment spans residues 54–74; that stretch reads LHAPMYLFLCMLAAIDLALST. The Extracellular segment spans residues 75-98; sequence STMPKILALFWFDSREITFDACLA. Residues Cys96 and Cys178 are joined by a disulfide bond. The chain crosses the membrane as a helical span at residues 99 to 119; it reads QMFFIHALSAIESTILLAMAF. Topologically, residues 120–138 are cytoplasmic; that stretch reads DRYVAICHPLRHAAVLNNT. A helical transmembrane segment spans residues 139–159; sequence VTVQIGMVALVRGSLFFFPLP. The Extracellular segment spans residues 160 to 195; that stretch reads LLIKRLAFCHSNVLSHSYCVHQDVMKLAYTDTLPNV. Residues 196–216 form a helical membrane-spanning segment; that stretch reads VYGLTAILLVMGVDVMFISLS. At 217-236 the chain is on the cytoplasmic side; the sequence is YFLIIRAVLQLPSKSERAKA. A helical membrane pass occupies residues 237–257; sequence FGTCVSHIGVVLAFYVPLIGL. Residues 258–272 lie on the Extracellular side of the membrane; sequence SVVHRFGNSLDPIVH. Residues 273–293 traverse the membrane as a helical segment; sequence VLMGDVYLLLPPVINPIIYGA. The Cytoplasmic portion of the chain corresponds to 294-320; that stretch reads KTKQIRTRVLAMFKISCDKDIEAGGNT.

This sequence belongs to the G-protein coupled receptor 1 family. Expressed in brain and liver. Expressed only in some areas of the brain and in the olfactory epithelium.

Its subcellular location is the cell membrane. It localises to the early endosome membrane. Its function is as follows. Olfactory receptor. The activity of this receptor is probably mediated by G-proteins which induce elevation of intracellular Ca(2+), cAMP and activation of phosphorylation of the protein kinases PKA and MAPK3/MAPK1. Activation of OR51E2 may affect melanocyte proliferation, differentiation, and melanogenesis and may increase proliferation and migration of primary retinal pigment epithelial (RPE) cells. Activated by the short chain fatty acids (SCFA), acetate and propionate. In response to SCFA, may positively regulate renin secretion and increase blood pressure. May also be activated by steroid hormones and regulate cell proliferation. Activated by L-lactate in glomus cells. This chain is Olfactory receptor 51E2 (Or51e2), found in Rattus norvegicus (Rat).